The following is a 186-amino-acid chain: NADH-ubiquinone oxidoreductase 17.8 kDa subunit, mitochondrial (186 aa).

Residues Met1–Tyr26 constitute a mitochondrion transit peptide. A disordered region spans residues Asn22–Ala49. The span at Tyr26–Ala49 shows a compositional bias: basic and acidic residues. Residues Leu58–Phe78 form a helical membrane-spanning segment.

Complex I is composed of about 40 different subunits.

It localises to the mitochondrion inner membrane. It catalyses the reaction a ubiquinone + NADH + 5 H(+)(in) = a ubiquinol + NAD(+) + 4 H(+)(out). Functionally, transfer of electrons from NADH to the respiratory chain. The immediate electron acceptor for the enzyme is believed to be ubiquinone. The polypeptide is NADH-ubiquinone oxidoreductase 17.8 kDa subunit, mitochondrial (nuo17.8) (Neurospora crassa (strain ATCC 24698 / 74-OR23-1A / CBS 708.71 / DSM 1257 / FGSC 987)).